Reading from the N-terminus, the 476-residue chain is Casein kinase 1-like protein 7 (476 aa).

The Protein kinase domain maps to 9-278; it reads FKLGKKIGSG…LKRLFRDLFI (270 aa). Residues 15–23 and lysine 38 each bind ATP; that span reads IGSGSFGEL. The active-site Proton acceptor is the aspartate 128. Disordered regions lie at residues 299-324 and 340-464; these read GSSS…DPIE and PGAV…TRED. Residues 357–367 are compositionally biased toward basic and acidic residues; it reads PRDRSRSRNSD. Residues 382-422 show a composition bias toward low complexity; that stretch reads ANSSSRYRASSSRKAVAASSSRPSSAGGPSESRTSSRLVSS. Gly residues predominate over residues 423 to 432; that stretch reads SGGGGSGSGN.

The protein belongs to the protein kinase superfamily. CK1 Ser/Thr protein kinase family. Casein kinase I subfamily. In terms of assembly, monomer. Post-translationally, autophosphorylated.

Its subcellular location is the cytoplasm. It catalyses the reaction L-seryl-[protein] + ATP = O-phospho-L-seryl-[protein] + ADP + H(+). It carries out the reaction L-threonyl-[protein] + ATP = O-phospho-L-threonyl-[protein] + ADP + H(+). Functionally, casein kinases are operationally defined by their preferential utilization of acidic proteins such as caseins as substrates. It can phosphorylate a large number of proteins. The chain is Casein kinase 1-like protein 7 from Arabidopsis thaliana (Mouse-ear cress).